Here is a 315-residue protein sequence, read N- to C-terminus: Acetaldehyde dehydrogenase (315 aa).

13-16 (SGNI) is an NAD(+) binding site. The active-site Acyl-thioester intermediate is the cysteine 143. NAD(+)-binding positions include 174-182 (SAGPGTRKN) and asparagine 285.

The protein belongs to the acetaldehyde dehydrogenase family.

The catalysed reaction is acetaldehyde + NAD(+) + CoA = acetyl-CoA + NADH + H(+). The chain is Acetaldehyde dehydrogenase from Shewanella woodyi (strain ATCC 51908 / MS32).